The chain runs to 345 residues: L-threonine 3-dehydrogenase (345 aa).

Cys39 contributes to the Zn(2+) binding site. Active-site charge relay system residues include Thr41 and His44. Residues His64, Glu65, Cys94, Cys97, Cys100, and Cys108 each coordinate Zn(2+). NAD(+) contacts are provided by residues Ile176, Asp196, Arg201, 263-265, and 287-288; these read LGI and VY.

It belongs to the zinc-containing alcohol dehydrogenase family. In terms of assembly, homotetramer. It depends on Zn(2+) as a cofactor.

It is found in the cytoplasm. It catalyses the reaction L-threonine + NAD(+) = (2S)-2-amino-3-oxobutanoate + NADH + H(+). The protein operates within amino-acid degradation; L-threonine degradation via oxydo-reductase pathway; glycine from L-threonine: step 1/2. In terms of biological role, catalyzes the NAD(+)-dependent oxidation of L-threonine to 2-amino-3-ketobutyrate. This chain is L-threonine 3-dehydrogenase, found in Anaeromyxobacter sp. (strain K).